The sequence spans 201 residues: 3-isopropylmalate dehydratase small subunit (201 aa).

It belongs to the LeuD family. LeuD type 1 subfamily. Heterodimer of LeuC and LeuD.

The enzyme catalyses (2R,3S)-3-isopropylmalate = (2S)-2-isopropylmalate. It participates in amino-acid biosynthesis; L-leucine biosynthesis; L-leucine from 3-methyl-2-oxobutanoate: step 2/4. In terms of biological role, catalyzes the isomerization between 2-isopropylmalate and 3-isopropylmalate, via the formation of 2-isopropylmaleate. The polypeptide is 3-isopropylmalate dehydratase small subunit (Afipia carboxidovorans (strain ATCC 49405 / DSM 1227 / KCTC 32145 / OM5) (Oligotropha carboxidovorans)).